Here is a 262-residue protein sequence, read N- to C-terminus: Small ribosomal subunit protein eS4x (262 aa).

Residues 42-104 (LPLVLIIRNR…TNENFRLLYD (63 aa)) enclose the S4 RNA-binding domain.

The protein belongs to the eukaryotic ribosomal protein eS4 family.

It localises to the cytoplasm. The polypeptide is Small ribosomal subunit protein eS4x (RPS4D) (Arabidopsis thaliana (Mouse-ear cress)).